The primary structure comprises 974 residues: MSSKKYELDAAAFEDKPESHSDAEMTPQKPQRRQSVLSKAVSEHDERATGPATDLLPPSKGLTTEEAEELLKKYGRNELPEKKTPSWLIYVRGLWGPMPAALWIAIIIEFALENWPDGAILFAIQIANATIGWYETIKAGDAVAALKNSLKPTATVYRDSKWQQIDAAVLVPGDLVKLASGSAVPADCSINEGVIDVDEAALTGESLPVTMGPEHMPKMGSNVVRGEVEGTVQYTGSLTFFGKTAALLQSVESDLGNIHVILRRVMFSLCAISFMLCMCCFIYLLARFYETFRHALQFAVVVLVVSIPIALEIVVTTTLAVGSKHLSKHKIIVTKLSAIEMMSGVNMLCSDKTGTLTLNKMEIQEQCFTFEEGNDLKSTLVLAALAAKWREPPRDALDTMVLGAADLDECDNYQQLNFVPFDPTTKRTAATLVDRRSGEKFDVTKGAPHVILQMVYNQDEINDEVVDIIDSLAARGVRCLSVAKTDQQGRWHMAGILTFLDPPRPDTKDTIRRSKEYGVDVKMITGDHLLIAKEMCRMLDLDPNILTADKLPQIKDANDLPEDLGEKYGDMMLSVGGFAQVFPEHKFMIVETLRQRGYTCAMTGDGVNDAPALKRADVGIAVHGATDAARAAADMVLTEPGLSVVVEAMLVSREVFQRMLSFLTYRISATLQLVCFFFIACFSLTPKAYGSVDPHFQFFHLPVLMFMLITLLNDGCLMTIGYDHVIPSERPQKWNLPVVFVSASILAAVACGSSLMLLWIGLEGYSSQYYENSWFHRLGLAQLPQGKLVTMMYLKISISDFLTLFSSRTGGHFFFYMPPSPILFCGAIISLLVSTMAASFWHKSRPDNVLTEGLAWGQTNAEKLLPLWVWIYCIVWWFVQDVVKVLAHICMDAVDLFGCVSDASGSGPIKPYSDDMKVNGFEPVKKPAEKSTEKALNSSVSSASHKALEGLREDTHSPIEEASPVNVYVSRDQK.

A compositionally biased stretch (basic and acidic residues) spans 1 to 23; that stretch reads MSSKKYELDAAAFEDKPESHSDA. A disordered region spans residues 1 to 61; it reads MSSKKYELDA…ATDLLPPSKG (61 aa). The Cytoplasmic segment spans residues 1-92; the sequence is MSSKKYELDA…KTPSWLIYVR (92 aa). The chain crosses the membrane as a helical span at residues 93–112; it reads GLWGPMPAALWIAIIIEFAL. Topologically, residues 113–117 are extracellular; that stretch reads ENWPD. A helical transmembrane segment spans residues 118–137; the sequence is GAILFAIQIANATIGWYETI. The Cytoplasmic portion of the chain corresponds to 138–264; the sequence is KAGDAVAALK…LGNIHVILRR (127 aa). The helical transmembrane segment at 265 to 286 threads the bilayer; the sequence is VMFSLCAISFMLCMCCFIYLLA. Residues 287–294 lie on the Extracellular side of the membrane; the sequence is RFYETFRH. The helical transmembrane segment at 295-321 threads the bilayer; sequence ALQFAVVVLVVSIPIALEIVVTTTLAV. The Cytoplasmic segment spans residues 322–630; that stretch reads GSKHLSKHKI…AVHGATDAAR (309 aa). The active-site 4-aspartylphosphate intermediate is the Asp-351. Positions 605 and 609 each coordinate Mg(2+). Residues 631–651 traverse the membrane as a helical segment; that stretch reads AAADMVLTEPGLSVVVEAMLV. Residues 652–661 lie on the Extracellular side of the membrane; it reads SREVFQRMLS. The helical transmembrane segment at 662–684 threads the bilayer; sequence FLTYRISATLQLVCFFFIACFSL. At 685 to 697 the chain is on the cytoplasmic side; it reads TPKAYGSVDPHFQ. A helical transmembrane segment spans residues 698-712; that stretch reads FFHLPVLMFMLITLL. Residues 713–737 lie on the Extracellular side of the membrane; it reads NDGCLMTIGYDHVIPSERPQKWNLP. Mg(2+) is bound at residue Asp-714. A helical transmembrane segment spans residues 738–761; it reads VVFVSASILAAVACGSSLMLLWIG. At 762 to 812 the chain is on the cytoplasmic side; sequence LEGYSSQYYENSWFHRLGLAQLPQGKLVTMMYLKISISDFLTLFSSRTGGH. A helical membrane pass occupies residues 813–840; it reads FFFYMPPSPILFCGAIISLLVSTMAASF. The Extracellular portion of the chain corresponds to 841–868; it reads WHKSRPDNVLTEGLAWGQTNAEKLLPLW. Residues 869–887 traverse the membrane as a helical segment; sequence VWIYCIVWWFVQDVVKVLA. Topologically, residues 888–974 are cytoplasmic; sequence HICMDAVDLF…VNVYVSRDQK (87 aa). Over residues 950–959 the composition is skewed to basic and acidic residues; sequence GLREDTHSPI. A disordered region spans residues 950-974; that stretch reads GLREDTHSPIEEASPVNVYVSRDQK.

It belongs to the cation transport ATPase (P-type) (TC 3.A.3) family. Type IIIA subfamily.

It is found in the membrane. It catalyses the reaction ATP + H2O + H(+)(in) = ADP + phosphate + 2 H(+)(out). This Leishmania donovani protein is Probable proton ATPase 1A (H1A).